A 376-amino-acid chain; its full sequence is dTDP-4-amino-4,6-dideoxygalactose transaminase (376 aa).

The residue at position 181 (K181) is an N6-(pyridoxal phosphate)lysine.

The protein belongs to the DegT/DnrJ/EryC1 family. Homotetramer. Pyridoxal 5'-phosphate is required as a cofactor.

It carries out the reaction dTDP-4-amino-4,6-dideoxy-alpha-D-galactose + 2-oxoglutarate = dTDP-4-dehydro-6-deoxy-alpha-D-glucose + L-glutamate. The protein operates within bacterial outer membrane biogenesis; enterobacterial common antigen biosynthesis. Functionally, catalyzes the synthesis of dTDP-4-amino-4,6-dideoxy-D-galactose (dTDP-Fuc4N) from dTDP-4-keto-6-deoxy-D-glucose (dTDP-D-Glc4O) and L-glutamate. This Escherichia coli (strain K12) protein is dTDP-4-amino-4,6-dideoxygalactose transaminase.